The sequence spans 194 residues: Holliday junction branch migration complex subunit RuvA (194 aa).

The domain I stretch occupies residues 1–63 (MFEYMKGMIV…EDEAHLYGFV (63 aa)). Residues 64-142 (DKEELAMFKK…DSQVEYDQNF (79 aa)) are domain II. The segment at 143–146 (FNHE) is flexible linker. Residues 146–194 (ENKNNNEVVDALMALGYTKHEGEQAASAVRDTSLSTEEMIRKALNWLAR) form a domain III region.

Belongs to the RuvA family. In terms of assembly, homotetramer. Forms an RuvA(8)-RuvB(12)-Holliday junction (HJ) complex. HJ DNA is sandwiched between 2 RuvA tetramers; dsDNA enters through RuvA and exits via RuvB. An RuvB hexamer assembles on each DNA strand where it exits the tetramer. Each RuvB hexamer is contacted by two RuvA subunits (via domain III) on 2 adjacent RuvB subunits; this complex drives branch migration. In the full resolvosome a probable DNA-RuvA(4)-RuvB(12)-RuvC(2) complex forms which resolves the HJ.

It is found in the cytoplasm. Functionally, the RuvA-RuvB-RuvC complex processes Holliday junction (HJ) DNA during genetic recombination and DNA repair, while the RuvA-RuvB complex plays an important role in the rescue of blocked DNA replication forks via replication fork reversal (RFR). RuvA specifically binds to HJ cruciform DNA, conferring on it an open structure. The RuvB hexamer acts as an ATP-dependent pump, pulling dsDNA into and through the RuvAB complex. HJ branch migration allows RuvC to scan DNA until it finds its consensus sequence, where it cleaves and resolves the cruciform DNA. This is Holliday junction branch migration complex subunit RuvA from Alkaliphilus metalliredigens (strain QYMF).